A 340-amino-acid chain; its full sequence is Latency-related protein 1 (340 aa).

2 disordered regions span residues 13 to 96 and 254 to 340; these read AALW…PNRQ and RLPG…PPRP. 2 repeat units span residues 27 to 43 and 59 to 75. Residues 27 to 75 form a 2 X 17 AA repeats region; it reads PTPTHPHSHAPPLPRTPTPSHPHSRAPPLPRAPTPTHPHSHAPPLPRTP. Residues 35–73 are compositionally biased toward pro residues; that stretch reads HAPPLPRTPTPSHPHSRAPPLPRAPTPTHPHSHAPPLPR. Gly residues predominate over residues 287–307; that stretch reads ARGGGSGGGRGPGGGRGGPRG. Positions 308–326 are enriched in basic residues; it reads SRGRGGRGRGGRGGGRRGR.

This chain is Latency-related protein 1, found in Human herpesvirus 1 (strain F) (HHV-1).